We begin with the raw amino-acid sequence, 268 residues long: Ethylene-responsive transcription factor ERN1 (268 aa).

Polar residues predominate over residues 1–21 (MEIQFQQPNMQNQKAGISVTN). A disordered region spans residues 1-36 (MEIQFQQPNMQNQKAGISVTNKGGKFKGRNRNSNNT). The segment at residues 38–95 (KFVGVRQRPSGRWVAEIKDTTQKIRMWLGTFETAEEAARAYDEAACLLRGSNTRTNFI) is a DNA-binding region (AP2/ERF). The tract at residues 114-154 (NRKGDKKQEDGAVASAPSNSKTTISNTSTITSNDDNKESTL) is disordered. Low complexity predominate over residues 131–146 (SNSKTTISNTSTITSN).

Belongs to the AP2/ERF transcription factor family. ERF subfamily. Expressed in roots, root hairs and leaves. Expressed in root epidermis and root hairs.

The protein resides in the nucleus. In terms of biological role, transcription factor involved in symbiotic nodule signaling in response to rhizobial Nod factors (NFs). Binds to the GCC-box (NF-responsive box) of ENOD11 promoter. Acts as a transcriptional activator of NF-responsive box-containing target gene promoters in root hairs. Functions as a transcriptional regulator required for root infection by symbiotic rhizobia, infection thread (IT) formation and maintenance, and nodule development. Necessary for NF-induced gene expression and spontaneous nodulation activated by CCAMK. Functions downstream of CCAMK to activate nodulation gene expression. Involved in early stages of root nodule development. Functions redundantly with ERN2. Is essential with ERN2 for the initiation of root hair infection, and nodule organogenesis and development. Required for accurate expression of the NF signaling genes ENOD11 and ENOD12. This chain is Ethylene-responsive transcription factor ERN1, found in Medicago truncatula (Barrel medic).